An 85-amino-acid polypeptide reads, in one-letter code: MAHKKAGGSTRNGRDSESKRLGVKRFGGQTVLAGNILVRQRGTQFHPGLNVGCGKDHTLFATSDGTVVFETKGPKNRKYVSVVQA.

Residues 1 to 23 form a disordered region; it reads MAHKKAGGSTRNGRDSESKRLGV.

This sequence belongs to the bacterial ribosomal protein bL27 family.

This chain is Large ribosomal subunit protein bL27, found in Thioalkalivibrio sulfidiphilus (strain HL-EbGR7).